The following is a 166-amino-acid chain: Ribosome maturation factor RimM (166 aa).

The 73-residue stretch at 94–166 (GDEYYWRDLM…EMVVRLLPGL (73 aa)) folds into the PRC barrel domain.

This sequence belongs to the RimM family. As to quaternary structure, binds ribosomal protein uS19.

It localises to the cytoplasm. An accessory protein needed during the final step in the assembly of 30S ribosomal subunit, possibly for assembly of the head region. Essential for efficient processing of 16S rRNA. May be needed both before and after RbfA during the maturation of 16S rRNA. It has affinity for free ribosomal 30S subunits but not for 70S ribosomes. This chain is Ribosome maturation factor RimM, found in Syntrophus aciditrophicus (strain SB).